We begin with the raw amino-acid sequence, 335 residues long: Casein kinase I (335 aa).

In terms of domain architecture, Protein kinase spans 9–278; the sequence is YRLGRKIGSG…LRRLFKDLFF (270 aa). ATP is bound by residues 15-23 and K38; that span reads IGSGSFGDI. D128 acts as the Proton acceptor in catalysis. The disordered stretch occupies residues 304 to 335; it reads RSMVNQGAESGNQWRRDASGRDPLGRLPQLEP. Over residues 305–316 the composition is skewed to polar residues; the sequence is SMVNQGAESGNQ. The span at 317–327 shows a compositional bias: basic and acidic residues; sequence WRRDASGRDPL.

The protein belongs to the protein kinase superfamily. CK1 Ser/Thr protein kinase family. Casein kinase I subfamily.

The catalysed reaction is L-seryl-[protein] + ATP = O-phospho-L-seryl-[protein] + ADP + H(+). The enzyme catalyses L-threonyl-[protein] + ATP = O-phospho-L-threonyl-[protein] + ADP + H(+). Functionally, casein kinases are operationally defined by their preferential utilization of acidic proteins such as caseins as substrates. It can phosphorylate a large number of proteins. In Eimeria tenella (Coccidian parasite), this protein is Casein kinase I.